A 175-amino-acid chain; its full sequence is Adenylyl-sulfate kinase (175 aa).

An ATP-binding site is contributed by 12 to 19 (GLSGAGKT). Ser86 acts as the Phosphoserine intermediate in catalysis.

Belongs to the APS kinase family.

It carries out the reaction adenosine 5'-phosphosulfate + ATP = 3'-phosphoadenylyl sulfate + ADP + H(+). Its pathway is sulfur metabolism; hydrogen sulfide biosynthesis; sulfite from sulfate: step 2/3. Functionally, catalyzes the synthesis of activated sulfate. The polypeptide is Adenylyl-sulfate kinase (Synechococcus sp. (strain JA-2-3B'a(2-13)) (Cyanobacteria bacterium Yellowstone B-Prime)).